A 511-amino-acid polypeptide reads, in one-letter code: 2,3-bisphosphoglycerate-independent phosphoglycerate mutase (511 aa).

Residues Asp-14 and Ser-64 each coordinate Mn(2+). The active-site Phosphoserine intermediate is Ser-64. Residues His-125, 155–156, Arg-187, Arg-193, 259–262, and Lys-333 contribute to the substrate site; these read RD and RADR. Asp-400, His-404, Asp-441, His-442, and His-460 together coordinate Mn(2+).

The protein belongs to the BPG-independent phosphoglycerate mutase family. Monomer. The cofactor is Mn(2+).

The enzyme catalyses (2R)-2-phosphoglycerate = (2R)-3-phosphoglycerate. It functions in the pathway carbohydrate degradation; glycolysis; pyruvate from D-glyceraldehyde 3-phosphate: step 3/5. In terms of biological role, catalyzes the interconversion of 2-phosphoglycerate and 3-phosphoglycerate. This is 2,3-bisphosphoglycerate-independent phosphoglycerate mutase from Pseudoalteromonas atlantica (strain T6c / ATCC BAA-1087).